Consider the following 266-residue polypeptide: Aquaporin TIP3-2 (266 aa).

The next 2 membrane-spanning stretches (helical) occupy residues 29-49 and 66-86; these read AAISEFIATAIFVFAAEGSVL and GLVAVALAHALGLAVAVAVAV. The short motif at 94–96 is the NPA 1 element; the sequence is NPA. The next 3 membrane-spanning stretches (helical) occupy residues 109–129, 153–173, and 180–200; these read LVRAVLYWAAQLLGAVAATLL, AVLLEAVMTFGFVYAYYATVV, and LGTIAPLAVGFLLGANVLAGG. An NPA 2 motif is present at residues 208–210; the sequence is NPA. The helical transmembrane segment at 228–248 threads the bilayer; sequence YWLGPFLGAGLAGLVYEYLLI.

Belongs to the MIP/aquaporin (TC 1.A.8) family. TIP (TC 1.A.8.10) subfamily.

The protein localises to the vacuole membrane. Its function is as follows. Aquaporins facilitate the transport of water and small neutral solutes across cell membranes. The protein is Aquaporin TIP3-2 (TIP3-2) of Zea mays (Maize).